A 159-amino-acid polypeptide reads, in one-letter code: Peptide methionine sulfoxide reductase MsrB (159 aa).

Positions 14-137 (TEKLKENLTE…NSASLKFIAK (124 aa)) constitute a MsrB domain. The active-site Nucleophile is the cysteine 126.

It belongs to the MsrB Met sulfoxide reductase family.

It catalyses the reaction L-methionyl-[protein] + [thioredoxin]-disulfide + H2O = L-methionyl-(R)-S-oxide-[protein] + [thioredoxin]-dithiol. The sequence is that of Peptide methionine sulfoxide reductase MsrB from Hathewaya histolytica (Clostridium histolyticum).